A 700-amino-acid polypeptide reads, in one-letter code: Elongation factor G (700 aa).

Positions 8-290 (ERYRNIGISA…AVIDYLPAPT (283 aa)) constitute a tr-type G domain. GTP contacts are provided by residues 17-24 (AHIDAGKT), 88-92 (DTPGH), and 142-145 (NKMD).

Belongs to the TRAFAC class translation factor GTPase superfamily. Classic translation factor GTPase family. EF-G/EF-2 subfamily.

It localises to the cytoplasm. Its function is as follows. Catalyzes the GTP-dependent ribosomal translocation step during translation elongation. During this step, the ribosome changes from the pre-translocational (PRE) to the post-translocational (POST) state as the newly formed A-site-bound peptidyl-tRNA and P-site-bound deacylated tRNA move to the P and E sites, respectively. Catalyzes the coordinated movement of the two tRNA molecules, the mRNA and conformational changes in the ribosome. This Pasteurella multocida (strain Pm70) protein is Elongation factor G (fusA).